Here is a 142-residue protein sequence, read N- to C-terminus: Large ribosomal subunit protein uL22c (142 aa).

The protein belongs to the universal ribosomal protein uL22 family. Part of the 50S ribosomal subunit.

The protein resides in the plastid. It localises to the chloroplast. In terms of biological role, this protein binds specifically to 23S rRNA. Functionally, the globular domain of the protein is located near the polypeptide exit tunnel on the outside of the subunit, while an extended beta-hairpin is found that lines the wall of the exit tunnel in the center of the 70S ribosome. The protein is Large ribosomal subunit protein uL22c (rpl22) of Pinus koraiensis (Korean pine).